The chain runs to 478 residues: RNA-binding protein 42 (478 aa).

Low complexity predominate over residues 1–20; sequence MASAMAGAGPAPGLPVAGGP. Positions 1-33 are disordered; sequence MASAMAGAGPAPGLPVAGGPVVPGPGVGIPGKS. Residue Ala-2 is modified to N-acetylalanine. At Ser-133 the chain carries Phosphoserine. An asymmetric dimethylarginine mark is found at Arg-151, Arg-156, Arg-166, and Arg-179. 2 disordered regions span residues 171–209 and 317–354; these read LSSAAGGPRPMALRPPHQALVGPPLPGPPGPPMMLPPMA and SLRPRPRPPRPEPPPGLMALEVPEPLGEDKKKGKPEKL. A compositionally biased stretch (pro residues) spans 193–205; it reads PPLPGPPGPPMML. The necessary for interaction with HNRNPK stretch occupies residues 234–478; it reads DLGLGLGLGL…QKEKKKLGLR (245 aa). Residues 343–354 are compositionally biased toward basic and acidic residues; sequence GEDKKKGKPEKL. One can recognise an RRM domain in the interval 379–457; it reads FRIFCGDLGN…RPIKLRKSMW (79 aa).

The protein belongs to the RRM RBM42 family. In terms of assembly, interacts with HNRNPK.

It localises to the nucleus. The protein resides in the cytoplasm. Binds (via the RRM domain) to the 3' untranslated region (UTR) of p21 mRNA. This Rattus norvegicus (Rat) protein is RNA-binding protein 42 (Rbm42).